A 340-amino-acid polypeptide reads, in one-letter code: DNA-directed RNA polymerase subunit alpha (340 aa).

An alpha N-terminal domain (alpha-NTD) region spans residues 1–236; it reads MLSLSKNWNT…EQLQLFISFE (236 aa). Positions 251 to 340 are alpha C-terminal domain (alpha-CTD); that stretch reads FSPYLLKRVD…LSKRYEDSYN (90 aa).

It belongs to the RNA polymerase alpha chain family. Homodimer. The RNAP catalytic core consists of 2 alpha, 1 beta, 1 beta' and 1 omega subunit. When a sigma factor is associated with the core the holoenzyme is formed, which can initiate transcription.

The enzyme catalyses RNA(n) + a ribonucleoside 5'-triphosphate = RNA(n+1) + diphosphate. DNA-dependent RNA polymerase catalyzes the transcription of DNA into RNA using the four ribonucleoside triphosphates as substrates. The chain is DNA-directed RNA polymerase subunit alpha from Rickettsia africae (strain ESF-5).